A 235-amino-acid chain; its full sequence is Large ribosomal subunit protein uL1 (235 aa).

The protein belongs to the universal ribosomal protein uL1 family. Part of the 50S ribosomal subunit.

Functionally, binds directly to 23S rRNA. The L1 stalk is quite mobile in the ribosome, and is involved in E site tRNA release. Its function is as follows. Protein L1 is also a translational repressor protein, it controls the translation of the L11 operon by binding to its mRNA. The sequence is that of Large ribosomal subunit protein uL1 from Prochlorococcus marinus (strain MIT 9313).